A 773-amino-acid polypeptide reads, in one-letter code: Photosystem I P700 chlorophyll a apoprotein A1 (773 aa).

The tract at residues 1–27 is disordered; it reads MTISPPERGEKAKGAAPTPYDQPVDRD. The next 8 membrane-spanning stretches (helical) occupy residues 80–103, 166–189, 205–229, 315–333, 375–398, 414–440, 462–484, and 564–582; these read IFSA…FHGA, LMAL…YHYH, LQHH…HIGA, ISHH…GHMW, WHGQ…HHMY, LGLF…IAMI, AIIS…LYIH, and LMIH…LILL. Residues Cys606 and Cys615 each coordinate [4Fe-4S] cluster. 2 helical membrane passes run 622–643 and 687–709; these read HVFL…HFSW and ISMY…MFLF. Residue His698 participates in divinylchlorophyll a' binding. Residues Met706 and Tyr714 each coordinate divinyl chlorophyll a. Trp715 provides a ligand contact to phylloquinone. The chain crosses the membrane as a helical span at residues 747 to 767; that stretch reads AVGVAHFLLGGIATTWAFFHA.

This sequence belongs to the PsaA/PsaB family. In terms of assembly, the PsaA/B heterodimer binds the P700 divinyl chlorophyll special pair and subsequent electron acceptors. PSI consists of a core antenna complex that captures photons, and an electron transfer chain that converts photonic excitation into a charge separation. The cyanobacterial PSI reaction center is composed of one copy each of PsaA,B,C,D,E,F,I,J,K,L,M and X, and forms trimeric complexes. PSI electron transfer chain: 5 divinyl chlorophyll a, 1 divinyl chlorophyll a', 2 phylloquinones and 3 4Fe-4S clusters. PSI core antenna: 90 divinyl chlorophyll a, 22 carotenoids, 3 phospholipids and 1 galactolipid. P700 is a divinyl chlorophyll a/divinyl chlorophyll a' dimer, A0 is one or more divinylchlorophyll a, A1 is one or both phylloquinones and FX is a shared 4Fe-4S iron-sulfur center. is required as a cofactor.

It is found in the cellular thylakoid membrane. It catalyses the reaction reduced [plastocyanin] + hnu + oxidized [2Fe-2S]-[ferredoxin] = oxidized [plastocyanin] + reduced [2Fe-2S]-[ferredoxin]. Its function is as follows. PsaA and PsaB bind P700, the primary electron donor of photosystem I (PSI), as well as the electron acceptors A0, A1 and FX. PSI is a plastocyanin/cytochrome c6-ferredoxin oxidoreductase, converting photonic excitation into a charge separation, which transfers an electron from the donor P700 chlorophyll pair to the spectroscopically characterized acceptors A0, A1, FX, FA and FB in turn. Oxidized P700 is reduced on the lumenal side of the thylakoid membrane by plastocyanin or cytochrome c6. This is Photosystem I P700 chlorophyll a apoprotein A1 from Prochlorococcus marinus (strain SARG / CCMP1375 / SS120).